The primary structure comprises 370 residues: Acyl-CoA:lysophosphatidylglycerol acyltransferase 1 (370 aa).

The chain crosses the membrane as a helical span at residues 22-42 (FAFMVANNLVAIPSYICYVII). The HXXXXD motif signature appears at 101 to 106 (HQATGD). A helical transmembrane segment spans residues 342 to 362 (MWIFLIQSFAFLSGYLWYHII).

Belongs to the 1-acyl-sn-glycerol-3-phosphate acyltransferase family. As to expression, ubiquitous. Expressed in heart, kidney, liver, skin, intestine, and thymus. Highest expression is detected in brain and testis.

It localises to the endoplasmic reticulum membrane. The catalysed reaction is a 2-acyl-sn-glycero-3-phosphoethanolamine + octadecanoyl-CoA = 1-octadecanoyl-2-acyl-sn-glycero-3-phosphoethanolamine + CoA. The enzyme catalyses 2-(9Z-octadecenoyl)-sn-glycero-3-phosphoethanolamine + octadecanoyl-CoA = 1-octadecanoyl-2-(9Z-octadecenoyl)-sn-glycero-3-phosphoethanolamine + CoA. It catalyses the reaction a 2-acyl-sn-glycero-3-phosphoethanolamine + hexadecanoyl-CoA = 1-hexadecanoyl-2-acyl-sn-glycero-3-phosphoethanolamine + CoA. It carries out the reaction 2-(9Z-octadecenoyl)-sn-glycero-3-phosphoethanolamine + hexadecanoyl-CoA = 1-hexadecanoyl-2-(9Z-octadecenoyl)-sn-glycero-3-phosphoethanolamine + CoA. The catalysed reaction is 1-tetradecanoyl-sn-glycero-3-phospho-(1'-sn-glycerol) + hexadecanoyl-CoA = 1-tetradecanoyl-2-hexadecanoyl-sn-glycero-3-phospho-(1'-sn-glycerol) + CoA. The enzyme catalyses 1-hexadecanoyl-sn-glycero-3-phospho-(1'-sn-glycerol) + dodecanoyl-CoA = 1-hexadecanoyl-2-dodecanoyl-sn-glycero-3-phospho-(1'-sn-glycerol) + CoA. It catalyses the reaction 1-hexadecanoyl-sn-glycero-3-phospho-(1'-sn-glycerol) + hexadecanoyl-CoA = 1,2-dihexadecanoyl-sn-glycero-3-phospho-(1'-sn-glycerol) + CoA. It carries out the reaction 1-hexadecanoyl-sn-glycero-3-phospho-(1'-sn-glycerol) + octadecanoyl-CoA = 1-hexadecanoyl-2-octadecanoyl-sn-glycero-3-phospho-(1'-sn-glycerol) + CoA. The catalysed reaction is 1-octadecanoyl-sn-glycero-3-phospho-(1'-sn-glycerol) + hexadecanoyl-CoA = 1-octadecanoyl-2-hexadecanoyl-sn-glycero-3-phospho-(1'-sn-glycerol) + CoA. The enzyme catalyses 1-(9Z-octadecenoyl)-sn-glycero-3-phospho-(1'-sn-glycerol) + dodecanoyl-CoA = 1-(9Z-octadecenoyl)-2-dodecanoyl-sn-glycero-3-phospho-(1'-sn-glycerol) + CoA. It catalyses the reaction 1-hexadecanoyl-sn-glycero-3-phospho-(1'-sn-glycerol) + (9Z)-octadecenoyl-CoA = 1-hexadecanoyl-2-(9Z-octadecenoyl)-sn-glycero-3-phospho-(1'-sn-glycerol) + CoA. It carries out the reaction 1-(9Z-octadecenoyl)-sn-glycero-3-phospho-(1'-sn-glycerol) + hexadecanoyl-CoA = 1-(9Z-octadecenoyl)-2-hexadecanoyl-sn-glycero-3-phospho-(1'-sn-glycerol) + CoA. The catalysed reaction is 1-(9Z-octadecenoyl)-sn-glycero-3-phospho-(1'-sn-glycerol) + (9Z)-octadecenoyl-CoA = 1,2-di-(9Z-octadecenoyl)-sn-glycero-3-phospho-(1'-sn-glycerol) + CoA. The enzyme catalyses a 2-acylglycerol + an acyl-CoA = a 1,2-diacylglycerol + CoA. It catalyses the reaction a 2-acylglycerol + hexadecanoyl-CoA = a 1-hexadecanoyl-2-acylglycerol + CoA. It carries out the reaction a 1-acylglycerol + hexadecanoyl-CoA = an hexadecanoyl-acylglycerol + CoA. The catalysed reaction is a 2-acyl-sn-glycero-3-phosphocholine + an acyl-CoA = a 1,2-diacyl-sn-glycero-3-phosphocholine + CoA. The enzyme catalyses 2-(9Z-octadecenoyl)-sn-glycero-3-phosphocholine + octadecanoyl-CoA = 1-octadecanoyl-2-(9Z-octadecenoyl)-sn-glycero-3-phosphocholine + CoA. It catalyses the reaction 2-(9Z,12Z-octadecadienoyl)-sn-glycero-3-phosphocholine + octadecanoyl-CoA = 1-octadecanoyl-2-(9Z,12Z)-octadecadienoyl-sn-glycero-3-phosphocholine + CoA. It carries out the reaction 2-(5Z,8Z,11Z,14Z)-eicosatetraenoyl-sn-glycero-3-phosphocholine + octadecanoyl-CoA = 1-octadecanoyl-2-(5Z,8Z,11Z,14Z-eicosatetraenoyl)-sn-glycero-3-phosphocholine + CoA. The catalysed reaction is 2-(9Z-octadecenoyl)-sn-glycero-3-phosphocholine + hexadecanoyl-CoA = 1-hexadecanoyl-2-(9Z-octadecenoyl)-sn-glycero-3-phosphocholine + CoA. The enzyme catalyses 2-(9Z-octadecenoyl)-sn-glycero-3-phospho-L-serine + hexadecanoyl-CoA = 1-hexadecanoyl-2-(9Z-octadecenoyl)-sn-glycero-3-phospho-L-serine + CoA. It catalyses the reaction 2-(4Z,7Z,10Z,13Z,16Z,19Z-docosahexaenoyl)-sn-glycero-3-phosphocholine + octadecanoyl-CoA = 1-octadecanoyl-2-(4Z,7Z,10Z,13Z,16Z,19Z-docosahexaenoyl)-sn-glycero-3-phosphocholine + CoA. It carries out the reaction 1-(9Z-octadecenoyl)-sn-glycero-3-phospho-L-serine + octadecanoyl-CoA = 1-(9Z-octadecenoyl)-2-octadecanoyl-sn-glycero-3-phospho-L-serine + CoA. The catalysed reaction is a 2-acyl-sn-glycero-3-phosphoethanolamine + a fatty acyl-CoA = a 1,2-diacyl-sn-glycero-3-phosphoethanolamine + CoA. Lysophospholipid acyltransferase involved in fatty acyl chain remodeling of glycerophospholipids in the endoplasmic reticulum membrane. Selectively catalyzes the transfer and esterification of saturated long-chain fatty acids from acyl-CoA to the sn-1 position of 1-lyso-2-acyl phosphatidylethanolamines (1-lyso-PE, LPE), with a preference for stearoyl CoA over palmitoyl CoA as acyl donor. Acts in concert with an unknown phospholipase A1 to convert palmitate PE species into stearate ones. Provides substrates to the PE methylation pathway, controlling stearate/palmitate composition of PE and phosphatidylcholine (PC) species with an overall impact on de novo hepatic lipid synthesis, body fat content and life span. Can acylate lysophosphatidylglycerols (LPG) using various saturated fatty acyl-CoAs as acyl donors. Can also acylate monoacylglycerols with a preference for 2-monoacylglycerols over 1-monoacylglycerols. Has no activity toward lysophosphatidic acids (LPA) and lysophosphatidylcholines (LPC). The protein is Acyl-CoA:lysophosphatidylglycerol acyltransferase 1 of Mus musculus (Mouse).